Consider the following 178-residue polypeptide: Caveolin-1 (178 aa).

Ser-2 bears the N-acetylserine mark. Ser-2 is modified (phosphoserine). Positions Ser-2–Val-94 are required for homooligomerization. Over Ser-2–Ser-104 the chain is Cytoplasmic. Position 5 is an N6-acetyllysine; alternate (Lys-5). Residue Lys-5 forms a Glycyl lysine isopeptide (Lys-Gly) (interchain with G-Cter in ubiquitin); alternate linkage. At Tyr-6 the chain carries Phosphotyrosine. A Phosphoserine modification is found at Ser-9. Tyr-14 carries the phosphotyrosine; by ABL1 modification. A Phosphotyrosine modification is found at Tyr-25. Residues Lys-26, Lys-30, Lys-39, Lys-47, and Lys-57 each participate in a glycyl lysine isopeptide (Lys-Gly) (interchain with G-Cter in ubiquitin) cross-link. The tract at residues Asp-82 to Val-94 is interaction with CAVIN3. The helical intramembrane region spans Ala-105 to Leu-125. At His-126–Ile-178 the chain is on the cytoplasmic side. The tract at residues Val-131–Gln-142 is interacts with SPRY1, SPRY2, SPRY3 and SPRY4. S-palmitoyl cysteine attachment occurs at residues Cys-133, Cys-143, and Cys-156. An interacts with SPRY1, SPRY2, and SPRY4 region spans residues Ser-149–Phe-160. Positions Phe-167–Ile-178 are interacts with SPRY1, SPRY2, SPRY3 and SPRY4.

The protein belongs to the caveolin family. In terms of assembly, homooligomer. Interacts with GLIPR2. Interacts with NOSTRIN. Interacts with SNAP25 and STX1A. Interacts (via the N-terminus) with DPP4; the interaction is direct. Interacts with CTNNB1, CDH1 and JUP. Interacts with PACSIN2; this interaction induces membrane tubulation. Interacts with SLC7A9. Interacts with BMX and BTK. Interacts with TGFBR1. Interacts with CAVIN3 (via leucine-zipper domain) in a cholesterol-sensitive manner. Interacts with CAVIN1. Interacts with EHD2 in a cholesterol-dependent manner. Forms a ternary complex with UBXN6 and VCP; mediates CAV1 targeting to lysosomes for degradation. Interacts with ABCG1; this interaction regulates ABCG1-mediated cholesterol efflux. Interacts with NEU3; this interaction enhances NEU3 sialidase activity within caveola. Interacts (via C-terminus) with SPRY1, SPRY2 (via C-terminus), SPRY3, and SPRY4. Interacts with IGFBP5; this interaction allows trafficking of IGFBP5 from the plasma membrane to the nucleus. Phosphorylated at Tyr-14 by ABL1 in response to oxidative stress. In terms of processing, ubiquitinated. Undergo monoubiquitination and multi- and/or polyubiquitination. Monoubiquitination of N-terminal lysines promotes integration in a ternary complex with UBXN6 and VCP which promotes oligomeric CAV1 targeting to lysosomes for degradation. Ubiquitinated by ZNRF1; leading to degradation and modulation of the TLR4-mediated immune response.

Its subcellular location is the golgi apparatus membrane. The protein resides in the cell membrane. It localises to the membrane. It is found in the caveola. The protein localises to the membrane raft. In terms of biological role, may act as a scaffolding protein within caveolar membranes. Forms a stable heterooligomeric complex with CAV2 that targets to lipid rafts and drives caveolae formation. Mediates the recruitment of CAVIN proteins (CAVIN1/2/3/4) to the caveolae. Interacts directly with G-protein alpha subunits and can functionally regulate their activity. Involved in the costimulatory signal essential for T-cell receptor (TCR)-mediated T-cell activation. Its binding to DPP4 induces T-cell proliferation and NF-kappa-B activation in a T-cell receptor/CD3-dependent manner. Recruits CTNNB1 to caveolar membranes and may regulate CTNNB1-mediated signaling through the Wnt pathway. Negatively regulates TGFB1-mediated activation of SMAD2/3 by mediating the internalization of TGFBR1 from membrane rafts leading to its subsequent degradation. Binds 20(S)-hydroxycholesterol (20(S)-OHC). This chain is Caveolin-1 (CAV1), found in Bos taurus (Bovine).